A 312-amino-acid chain; its full sequence is Malate dehydrogenase (312 aa).

NAD(+) is bound by residues 7 to 13 (GAAGGIG) and D34. Substrate is bound by residues R81 and R87. NAD(+) is bound by residues N94 and 117–119 (ITN). Substrate is bound by residues N119 and R153. H177 acts as the Proton acceptor in catalysis. Residue M227 participates in NAD(+) binding.

Belongs to the LDH/MDH superfamily. MDH type 1 family. Homodimer.

It carries out the reaction (S)-malate + NAD(+) = oxaloacetate + NADH + H(+). Its function is as follows. Catalyzes the reversible oxidation of malate to oxaloacetate. This is Malate dehydrogenase from Yersinia pseudotuberculosis serotype O:1b (strain IP 31758).